Here is a 151-residue protein sequence, read N- to C-terminus: MQEIKMKTLSAGIIFMTEDKDLFMGRVTGSRKTGMMAHRWDIPKGRVENSDLSALDAARRECLEETGFSNYNPDLLEDLGVFKYSSNKDLQLFYYTIPVEHEMFRNCRCESYFENKDGVMIPEMDAFALIPRTQWQYVMGPSLYRIMNNLF.

Positions 6–143 constitute a Nudix hydrolase domain; sequence MKTLSAGIIF…QWQYVMGPSL (138 aa).

This is an uncharacterized protein from Escherichia coli (Bacteriophage T4).